We begin with the raw amino-acid sequence, 49 residues long: Large ribosomal subunit protein eL40 (49 aa).

Belongs to the eukaryotic ribosomal protein eL40 family.

The sequence is that of Large ribosomal subunit protein eL40 from Methanopyrus kandleri (strain AV19 / DSM 6324 / JCM 9639 / NBRC 100938).